Here is a 196-residue protein sequence, read N- to C-terminus: Large ribosomal subunit protein eL15 (196 aa).

Positions P154 to K196 are disordered.

It belongs to the eukaryotic ribosomal protein eL15 family.

This is Large ribosomal subunit protein eL15 from Methanospirillum hungatei JF-1 (strain ATCC 27890 / DSM 864 / NBRC 100397 / JF-1).